A 458-amino-acid polypeptide reads, in one-letter code: Bifunctional thioredoxin reductase/thioredoxin (458 aa).

Residues 1–321 form a thioredoxin reductase region; sequence MNTTPSAHET…LAEHAGSKAN (321 aa). FAD contacts are provided by residues 19–22, 41–48, Asn57, and Val90; these read SGPA and EGTSFGGA. A disulfide bond links Cys142 and Cys145. 5 residues coordinate NADP(+): Ser163, His182, Arg188, Ile245, and Tyr265. Residues Asp285 and 292–295 each bind FAD; that span reads RQAI. An NADP(+)-binding site is contributed by Arg292. The interval 322 to 347 is linker; that stretch reads ETTEETGDVDSTDTTDWSTAMTDAKN. The Thioredoxin domain occupies 341-455; the sequence is AMTDAKNAGV…LLRDLSDVVP (115 aa). A disulfide bridge links Cys379 with Cys382.

In the N-terminal section; belongs to the class-II pyridine nucleotide-disulfide oxidoreductase family. As to quaternary structure, homodimer. Requires FAD as cofactor.

Its subcellular location is the cytoplasm. The enzyme catalyses [thioredoxin]-dithiol + NADP(+) = [thioredoxin]-disulfide + NADPH + H(+). This Mycobacterium leprae (strain TN) protein is Bifunctional thioredoxin reductase/thioredoxin (trxB/A).